Consider the following 998-residue polypeptide: Methyl sulfide methyltransferase-associated sensor (998 aa).

In terms of domain architecture, PAS 1 spans phenylalanine 40–aspartate 77. Residues phenylalanine 117–alanine 169 form the PAC 1 domain. The PAS 2 domain maps to leucine 209–glycine 246. Positions phenylalanine 250–serine 302 constitute a PAC 2 domain. In terms of domain architecture, GAF 1 spans alanine 314–glutamate 458. The region spanning serine 469–glycine 540 is the PAS 3 domain. Residues alanine 609 to glutamine 752 form the GAF 2 domain. Cysteine 656 contacts heme. One can recognise a Histidine kinase domain in the interval glutamate 783–lysine 998.

It depends on heme as a cofactor. Post-translationally, autophosphorylates: autophosphorylation is dependent on the redox state of heme cofactor and is promoted upon reduction.

The protein resides in the cytoplasm. The catalysed reaction is ATP + protein L-histidine = ADP + protein N-phospho-L-histidine.. Functionally, heme-binding sensor kinase component part of a two-component regulatory system involved in methyl sulfide metabolism. Does not act as a phytochrome-like photoreceptor. The polypeptide is Methyl sulfide methyltransferase-associated sensor (msmS) (Methanosarcina acetivorans (strain ATCC 35395 / DSM 2834 / JCM 12185 / C2A)).